The chain runs to 524 residues: Phosphoenolpyruvate carboxykinase (ATP) (524 aa).

Positions 52, 188, and 194 each coordinate substrate. Residues K194, H213, and 229–237 contribute to the ATP site; that span reads GLSGTGKTT. Mn(2+) is bound by residues K194 and H213. D250 lines the Mn(2+) pocket. Residues E278, R314, and T439 each contribute to the ATP site. Residue R314 participates in substrate binding.

This sequence belongs to the phosphoenolpyruvate carboxykinase (ATP) family. The cofactor is Mn(2+).

The protein localises to the cytoplasm. The enzyme catalyses oxaloacetate + ATP = phosphoenolpyruvate + ADP + CO2. It participates in carbohydrate biosynthesis; gluconeogenesis. In terms of biological role, involved in the gluconeogenesis. Catalyzes the conversion of oxaloacetate (OAA) to phosphoenolpyruvate (PEP) through direct phosphoryl transfer between the nucleoside triphosphate and OAA. The protein is Phosphoenolpyruvate carboxykinase (ATP) of Campylobacter lari (strain RM2100 / D67 / ATCC BAA-1060).